We begin with the raw amino-acid sequence, 726 residues long: MMNQTVTEEAVRRLAEGTHHDPFQILGCHAVGKKWEVRVWLPTAESASVEGWHALTRVEGTSLFIASLTEKQKKALPLHFKVNWVEANGSEHTVVSPYTFLPQLGELDLHLYAEGRHWHVYDVLGAQVKEVDNISGVQFSVWAPAASRVSVVGDFNGWNGLRHPMRTNGQSGVWELFIPGMVSGDIYKFEIRNYQTDQLLVKTDPYAKAMEFRPQTGSIVYDSTFQWQDRDWLAARAHFDWQASPINIYEVHLGSWQRDHDGFFLNYKEIAQRLVEYVKWMGYTHIELLPISEHPLDESWGYQTTGYFSPTSRFGSPDDFRYFVNYCHENGIGVFLDWVPAHFPKDEFALARFDGTALYEHEDPRRGEHQDWGTYIFNYGRNEVRNFLIANALYWLKELHIDGLRVDAVASMLYLDYSRKDGDWLPNQYGGRENIEAIEFLKTLNAEVHAQCPGALMMAEESTSWPMVSRPTWMGGLGFSMKWNMGWMNDTLDFFQQDPIYRPYHHNQLTFSQMYAYSENFILPLSHDEVVHMKHALVSKMPGDTWQKMANMRLLMGYQTLNPGKKLLFMGGEFAQWQEWSESRGLDWYLCEQPANRGVQMLVRDLNLLYQTSPALYCHDFDQEGFEWIDCHDYEQSVLSFVRISEKESLICVFNFTPVPRYDYRIGLPETGIYEEVLNSDSELYGGGNVGNSGQLTTEDQRWMNRPCSTTLVLPPLAVVVLRKKS.

Aspartate 407 (nucleophile) is an active-site residue. Glutamate 460 functions as the Proton donor in the catalytic mechanism.

Belongs to the glycosyl hydrolase 13 family. GlgB subfamily. As to quaternary structure, monomer.

The catalysed reaction is Transfers a segment of a (1-&gt;4)-alpha-D-glucan chain to a primary hydroxy group in a similar glucan chain.. It participates in glycan biosynthesis; glycogen biosynthesis. Its function is as follows. Catalyzes the formation of the alpha-1,6-glucosidic linkages in glycogen by scission of a 1,4-alpha-linked oligosaccharide from growing alpha-1,4-glucan chains and the subsequent attachment of the oligosaccharide to the alpha-1,6 position. The chain is 1,4-alpha-glucan branching enzyme GlgB from Hydrogenovibrio crunogenus (strain DSM 25203 / XCL-2) (Thiomicrospira crunogena).